Reading from the N-terminus, the 352-residue chain is Sphingosine 1-phosphate receptor 2 (352 aa).

Residues 1 to 34 lie on the Extracellular side of the membrane; sequence MGGLYSEYLNPEKVQEHYNYTKETLDMQETPSRK. N-linked (GlcNAc...) asparagine glycosylation occurs at asparagine 19. The helical transmembrane segment at 35–59 threads the bilayer; sequence VASAFIIILCCAIVVENLLVLIAVA. Residues 60-66 lie on the Cytoplasmic side of the membrane; that stretch reads RNSKFHS. A helical membrane pass occupies residues 67-95; the sequence is AMYLFLGNLAASDLLAGVAFVANTLLSGP. The Extracellular segment spans residues 96–109; sequence VTLSLTPLQWFARE. A helical transmembrane segment spans residues 110–128; sequence GSAFITLSASVFSLLAIAI. The Cytoplasmic portion of the chain corresponds to 129 to 147; that stretch reads ERQVAIAKVKLYGSDKSCR. Residues 148–173 form a helical membrane-spanning segment; it reads MLMLIGASWLISLILGGLPILGWNCL. Residues 174–189 are Extracellular-facing; it reads DHLEACSTVLPLYAKH. A helical membrane pass occupies residues 190 to 210; sequence YVLCVVTIFSVILLAIVALYV. Residues 211-233 are Cytoplasmic-facing; the sequence is RIYFVVRSSHADVAGPQTLALLK. The chain crosses the membrane as a helical span at residues 234-255; that stretch reads TVTIVLGVFIICWLPAFSILLL. The Extracellular segment spans residues 256-271; that stretch reads DSTCPVRACPVLYKAH. Residues 272–292 traverse the membrane as a helical segment; sequence YFFAFATLNSLLNPVIYTWRS. Over 293-352 the chain is Cytoplasmic; it reads RDLRREVLRPLLCWRQGKGATGRRGGNPGHRLLPLRSSSSLERGLHMPTSPTFLEGNTVV. A lipid anchor (S-palmitoyl cysteine) is attached at cysteine 305.

It belongs to the G-protein coupled receptor 1 family. In terms of tissue distribution, expressed in all developing tissues with highest levels detected in primitive, transformed cells. Relative abundance: lung &gt; kidney = skin = gut &gt; spleen &gt; brain &gt; liver.

It localises to the cell membrane. Receptor for the lysosphingolipid sphingosine 1-phosphate (S1P). S1P is a bioactive lysophospholipid that elicits diverse physiological effects on most types of cells and tissues. Receptor for the chemokine-like protein FAM19A5. Mediates the inhibitory effect of FAM19A5 on vascular smooth muscle cell proliferation and migration. In lymphoid follicles, couples the binding of S1P to the activation of GNA13 and downstream inhibition of AKT activation leading to suppression of germinal center (GC) B cell growth and migration outside the GC niche. The polypeptide is Sphingosine 1-phosphate receptor 2 (S1pr2) (Rattus norvegicus (Rat)).